We begin with the raw amino-acid sequence, 550 residues long: Eukaryotic translation initiation factor 3 subunit L (550 aa).

The disordered stretch occupies residues 1–20 (MVRDSFDGGHTGDPERDLAY). In terms of domain architecture, PCI spans 309 to 503 (EATKIFVNCL…IDDSTTDLDF (195 aa)).

The protein belongs to the eIF-3 subunit L family. As to quaternary structure, component of the eukaryotic translation initiation factor 3 (eIF-3) complex.

The protein localises to the cytoplasm. Component of the eukaryotic translation initiation factor 3 (eIF-3) complex, which is involved in protein synthesis of a specialized repertoire of mRNAs and, together with other initiation factors, stimulates binding of mRNA and methionyl-tRNAi to the 40S ribosome. The eIF-3 complex specifically targets and initiates translation of a subset of mRNAs involved in cell proliferation. In Brugia malayi (Filarial nematode worm), this protein is Eukaryotic translation initiation factor 3 subunit L.